The chain runs to 352 residues: Aliphatic aldoxime dehydratase (352 aa).

Residue S219 coordinates an aliphatic aldoxime. H299 contacts heme b. H320 serves as a coordination point for an aliphatic aldoxime. H320 is a catalytic residue.

The protein belongs to the heme-containing dehydratase family. Homodimer. It depends on heme b as a cofactor. Ca(2+) serves as cofactor.

It carries out the reaction an aliphatic aldoxime = a nitrile + H2O. Active when the heme iron is in the ferrous state. Is very sensitive to AgNO(3), is also inhibited by hydroxylamine and phenylhydrazine, and hardly inhibited by thiol reagents. Not sensitive to chelating agents and serine-modifying reagents. Functionally, catalyzes the dehydration of aldoximes to their corresponding nitrile. Aliphatic aldoximes are more effective substrates than aromatic aldoximes. Shows high activity with butyraldoxime and acetaldoxime, but only weak activity with the aromatic aldoxime pyridine-2-aldoxime. Cannot use benzaldoxime, isonitrosoacetophenone and pyridine-4-aldoxime. Is involved in the metabolism of aldoxime in vivo. This chain is Aliphatic aldoxime dehydratase, found in Pseudomonas chlororaphis (Pseudomonas aureofaciens).